Reading from the N-terminus, the 154-residue chain is 17.6 kDa class I heat shock protein (154 aa).

One can recognise a sHSP domain in the interval 40–154; the sequence is ETSAFANTRI…PDVKSIEISG (115 aa).

Belongs to the small heat shock protein (HSP20) family. In terms of assembly, forms oligomeric structures.

Its subcellular location is the cytoplasm. The polypeptide is 17.6 kDa class I heat shock protein (Solanum peruvianum (Peruvian tomato)).